The chain runs to 338 residues: Probable dual-specificity RNA methyltransferase RlmN (338 aa).

Glu89 functions as the Proton acceptor in the catalytic mechanism. One can recognise a Radical SAM core domain in the interval 95–325 (HNYGMSACVT…AILRKEQGHD (231 aa)). The cysteines at positions 102 and 330 are disulfide-linked. Residues Cys109, Cys113, and Cys116 each coordinate [4Fe-4S] cluster. Residues 156–157 (GE), Ser188, 211–213 (SLH), and Asn287 contribute to the S-adenosyl-L-methionine site. Catalysis depends on Cys330, which acts as the S-methylcysteine intermediate.

The protein belongs to the radical SAM superfamily. RlmN family. [4Fe-4S] cluster serves as cofactor.

It localises to the cytoplasm. It carries out the reaction adenosine(2503) in 23S rRNA + 2 reduced [2Fe-2S]-[ferredoxin] + 2 S-adenosyl-L-methionine = 2-methyladenosine(2503) in 23S rRNA + 5'-deoxyadenosine + L-methionine + 2 oxidized [2Fe-2S]-[ferredoxin] + S-adenosyl-L-homocysteine. The enzyme catalyses adenosine(37) in tRNA + 2 reduced [2Fe-2S]-[ferredoxin] + 2 S-adenosyl-L-methionine = 2-methyladenosine(37) in tRNA + 5'-deoxyadenosine + L-methionine + 2 oxidized [2Fe-2S]-[ferredoxin] + S-adenosyl-L-homocysteine. Functionally, specifically methylates position 2 of adenine 2503 in 23S rRNA and position 2 of adenine 37 in tRNAs. The sequence is that of Probable dual-specificity RNA methyltransferase RlmN from Acholeplasma laidlawii (strain PG-8A).